Here is a 138-residue protein sequence, read N- to C-terminus: Eukaryotic translation initiation factor 1A (138 aa).

Residues 1-15 (MPKNKGKGGKNRRRG) are compositionally biased toward basic residues. The interval 1 to 28 (MPKNKGKGGKNRRRGKNENENEKRELTY) is disordered. Basic and acidic residues predominate over residues 16 to 27 (KNENENEKRELT). An S1-like domain is found at 22-96 (EKRELTYAEE…EKGDVILKYT (75 aa)).

Belongs to the eIF-1A family.

In terms of biological role, seems to be required for maximal rate of protein biosynthesis. Enhances ribosome dissociation into subunits and stabilizes the binding of the initiator Met-tRNA(I) to 40 S ribosomal subunits. The sequence is that of Eukaryotic translation initiation factor 1A (tif11) from Schizosaccharomyces pombe (strain 972 / ATCC 24843) (Fission yeast).